Consider the following 522-residue polypeptide: Neuropeptide FF receptor 2 (522 aa).

Topologically, residues 1–147 are extracellular; sequence MNSFFGTPAA…NYYLHQPQVA (147 aa). Positions 25–49 are disordered; it reads KEAGRERRALSVQQRGGPAWSGSLE. Asn110, Asn122, and Asn133 each carry an N-linked (GlcNAc...) asparagine glycan. The helical transmembrane segment at 148–168 threads the bilayer; the sequence is AIFIISYFLIFFLCMMGNTVV. Residues 169–184 lie on the Cytoplasmic side of the membrane; the sequence is CFIVMRNKHMHTVTNL. A helical membrane pass occupies residues 185–205; the sequence is FILNLAISDLLVGIFCMPITL. The Extracellular segment spans residues 206-221; that stretch reads LDNIIAGWPFGNTMCK. A disulfide bridge connects residues Cys220 and Cys308. The helical transmembrane segment at 222 to 242 threads the bilayer; it reads ISGLVQGISVAASVFTLVAIA. The Cytoplasmic portion of the chain corresponds to 243–262; sequence VDRFQCVVYPFKPKLTIKTA. A helical membrane pass occupies residues 263-283; sequence FVIIMIIWVLAITIMSPSAVM. Over 284–319 the chain is Extracellular; it reads LHVQEEKYYRVRLNSQNKTSPVYWCREDWPNQEMRK. N-linked (GlcNAc...) asparagine glycosylation occurs at Asn300. The chain crosses the membrane as a helical span at residues 320 to 340; the sequence is IYTTVLFANIYLAPLSLIVIM. Residues 341–377 are Cytoplasmic-facing; that stretch reads YGRIGISLFRAAVPHTGRKNQEQWHVVSRKKQKIIKM. The helical transmembrane segment at 378 to 398 threads the bilayer; that stretch reads LLIVALLFILSWLPLWTLMML. Residues 399–413 lie on the Extracellular side of the membrane; the sequence is SDYADLSPNELQIIN. The chain crosses the membrane as a helical span at residues 414-434; sequence IYIYPFAHWLAFGNSSVNPII. Residues 435 to 522 lie on the Cytoplasmic side of the membrane; the sequence is YGFFNENFRR…LKETTNSSEI (88 aa).

Belongs to the G-protein coupled receptor 1 family. As to expression, isoform 1 is abundant in placenta. Relatively highly expressed in thymus, testis, and small intestine. Expressed at low levels in several tissues including spleen, prostate, brain, heart, ovary, colon, kidney, lung, liver and pancreas and not expressed in skeletal muscle and leukocytes. Isoform 2 expression is highest in placenta (but at relatively low level compared to isoform 1). Very low level of expression in numerous tissues including adipose tissue and many brain regions. Isoform 3 is expressed in brain and heart and, at lower levels, in kidney, liver, lung and pancreas.

The protein resides in the cell membrane. Receptor for NPAF (A-18-F-amide) and NPFF (F-8-F-amide) neuropeptides, also known as morphine-modulating peptides. Can also be activated by a variety of naturally occurring or synthetic FMRF-amide like ligands. This receptor mediates its action by association with G proteins that activate a phosphatidylinositol-calcium second messenger system. The protein is Neuropeptide FF receptor 2 of Homo sapiens (Human).